An 842-amino-acid polypeptide reads, in one-letter code: Glucans biosynthesis glucosyltransferase H (842 aa).

A run of 8 helical transmembrane segments spans residues 140 to 160 (ILLLLTLSQTVVATWYMKTIL), 194 to 214 (ILILFAVLFCWVSAGFWTALM), 513 to 533 (VFLTGVMSYLSAPLWFMFLAL), 568 to 588 (IALFASTMVLLFLPKLLSIIL), 600 to 620 (FIRVTLSLLLEVLFSVLLAPV), 622 to 642 (MLFHTVFVVSAFLGWEVVWNS), 656 to 676 (FMRHGSQLLLGLVWAVGMAWL), and 680 to 700 (FLFWLAPIVVSLILSPFVSAI).

It belongs to the glycosyltransferase 2 family. OpgH subfamily.

It localises to the cell inner membrane. It functions in the pathway glycan metabolism; osmoregulated periplasmic glucan (OPG) biosynthesis. Its function is as follows. Involved in the biosynthesis of osmoregulated periplasmic glucans (OPGs). The chain is Glucans biosynthesis glucosyltransferase H from Klebsiella pneumoniae (strain 342).